The sequence spans 185 residues: Peptidyl-tRNA hydrolase (185 aa).

Tyrosine 14 is a binding site for tRNA. The Proton acceptor role is filled by histidine 19. TRNA-binding residues include tyrosine 64, asparagine 66, and asparagine 112.

Belongs to the PTH family. In terms of assembly, monomer.

It localises to the cytoplasm. It carries out the reaction an N-acyl-L-alpha-aminoacyl-tRNA + H2O = an N-acyl-L-amino acid + a tRNA + H(+). Hydrolyzes ribosome-free peptidyl-tRNAs (with 1 or more amino acids incorporated), which drop off the ribosome during protein synthesis, or as a result of ribosome stalling. In terms of biological role, catalyzes the release of premature peptidyl moieties from peptidyl-tRNA molecules trapped in stalled 50S ribosomal subunits, and thus maintains levels of free tRNAs and 50S ribosomes. The sequence is that of Peptidyl-tRNA hydrolase from Lactobacillus acidophilus (strain ATCC 700396 / NCK56 / N2 / NCFM).